Consider the following 195-residue polypeptide: CASP-like protein 1B1 (195 aa).

Over 1-22 (MGLQNEEKLELGCTGLQPKPKK) the chain is Cytoplasmic. A helical transmembrane segment spans residues 23–43 (WVLLMVRVVAFLATAAATLVM). Topologically, residues 44-75 (ALNKETKTLVVATVGNTPIKVTLTAKFQHTPA) are extracellular. Residues 76-96 (FVFFVIANGMASFHNLLMIMV) form a helical membrane-spanning segment. The Cytoplasmic portion of the chain corresponds to 97–109 (ELCGQKLDYKGMR). A helical transmembrane segment spans residues 110 to 130 (LAMVAILDMMTVALVSGGASA). Residues 131-163 (ATFMAELGKNGNSHARWDKICDKFETFCDHGGA) are Extracellular-facing. A helical membrane pass occupies residues 164–184 (ALIASSAGLILMMIISVMSIM). Residues 185 to 195 (KLLIKPKSDSS) are Cytoplasmic-facing.

It belongs to the Casparian strip membrane proteins (CASP) family. Homodimer and heterodimers.

It localises to the cell membrane. The protein is CASP-like protein 1B1 of Populus trichocarpa (Western balsam poplar).